The chain runs to 228 residues: Small ribosomal subunit protein uS2 (228 aa).

It belongs to the universal ribosomal protein uS2 family.

This is Small ribosomal subunit protein uS2 from Buchnera aphidicola subsp. Baizongia pistaciae (strain Bp).